The primary structure comprises 302 residues: Ribosomal RNA small subunit methyltransferase A (302 aa).

6 residues coordinate S-adenosyl-L-methionine: His15, Leu17, Gly42, Glu64, Asp89, and Asn109. The interval Asp275–Ile302 is disordered.

Belongs to the class I-like SAM-binding methyltransferase superfamily. rRNA adenine N(6)-methyltransferase family. RsmA subfamily.

Its subcellular location is the cytoplasm. The catalysed reaction is adenosine(1518)/adenosine(1519) in 16S rRNA + 4 S-adenosyl-L-methionine = N(6)-dimethyladenosine(1518)/N(6)-dimethyladenosine(1519) in 16S rRNA + 4 S-adenosyl-L-homocysteine + 4 H(+). Its function is as follows. Specifically dimethylates two adjacent adenosines (A1518 and A1519) in the loop of a conserved hairpin near the 3'-end of 16S rRNA in the 30S particle. May play a critical role in biogenesis of 30S subunits. The polypeptide is Ribosomal RNA small subunit methyltransferase A (Parasynechococcus marenigrum (strain WH8102)).